We begin with the raw amino-acid sequence, 586 residues long: Arginine--tRNA ligase (586 aa).

The 'HIGH' region motif lies at alanine 128–histidine 138.

It belongs to the class-I aminoacyl-tRNA synthetase family. In terms of assembly, monomer.

The protein localises to the cytoplasm. It catalyses the reaction tRNA(Arg) + L-arginine + ATP = L-arginyl-tRNA(Arg) + AMP + diphosphate. In Legionella pneumophila (strain Corby), this protein is Arginine--tRNA ligase.